The sequence spans 166 residues: Transcription elongation factor GreA (166 aa).

This sequence belongs to the GreA/GreB family.

Its function is as follows. Necessary for efficient RNA polymerase transcription elongation past template-encoded arresting sites. The arresting sites in DNA have the property of trapping a certain fraction of elongating RNA polymerases that pass through, resulting in locked ternary complexes. Cleavage of the nascent transcript by cleavage factors such as GreA or GreB allows the resumption of elongation from the new 3'terminus. GreA releases sequences of 2 to 3 nucleotides. The sequence is that of Transcription elongation factor GreA from Anaeromyxobacter sp. (strain K).